We begin with the raw amino-acid sequence, 329 residues long: Sex comb on midleg-like protein 1 (329 aa).

The disordered stretch occupies residues 125–194; the sequence is NEVHESFSYP…SDFSEHNYQP (70 aa). A Phosphoserine modification is found at S138. Basic and acidic residues predominate over residues 159–168; sequence FRMEEYQRAE. At S238 the chain carries Phosphoserine. In terms of domain architecture, SAM spans 258–325; it reads WSVEAVVLFL…YYIDRLKQGK (68 aa).

It belongs to the SCM family. As to expression, highly expressed in testis and pancreas. Preferentially expressed in the germ stem cells of testis.

Its subcellular location is the nucleus. Functionally, putative Polycomb group (PcG) protein. PcG proteins act by forming multiprotein complexes, which are required to maintain the transcriptionally repressive state of homeotic genes throughout development. May be involved in spermatogenesis during sexual maturation. The chain is Sex comb on midleg-like protein 1 (SCML1) from Macaca mulatta (Rhesus macaque).